Reading from the N-terminus, the 1534-residue chain is MVDVNDVIHANEKAQIDFAQMLLPEGIRRDNNKMYEEVEIPPNEPMPIGFEEKAVFVSELDEIGQLVFKGMKRLNRIQSIVFETAYNTNENLLICAPTGAGKTNIAMLTILHEIRQHLQPGGVIRKDQFKIVYVAPMKALAAEMTNYFSKRLEPLGIAVKELTGDMQLTKGEILRTQMLVTTPEKWDVVTRKSVGDVALSQVVRLLILDEVHLLHEDRGPVLESLVARTLRQVESTQSMIRILGLSATLPNYLDVATFLHVNPFIGLFYFDSRFRPVPLGQSFVGIKTTNKVQQLHDMEEVCYEKVLKQIKAGHQVMVFVHARNSTVRTAMSLIEMAKNRGELSFFQVDQGADYGQCEKQIQRSRNKQMREMFPDGFGIHHAGMLRQDRSLMESMFSRGYLKVLVCTATLAWGVNLPAHAVIIKGTNIYDAKRGTLVDLGILDVMQIFGRAGRPQFDKYGEGTIITTHDKLSHYLTLLTQQNPIESQFQQSLADNLNAEIALGTVTNVDEAVRWLSYTYLYVRMRANPLAYGINHKAYQMDPQLELYRKELVVESGRKLDKARMIRFDERTGYFASTDLGRTASHFYIKYNTIESFNELFNAQNTEADVLSIVSKAEEFEQIKVRVQEEDADGKSSVQILCGSHHTNAARIMRALFEMALRKRWPAMTYRLLNLCKVMDKRLWGWAHPLRQFNTLPASALARMEDKNLTIDKLRDMGKDEIGHMLHHVNIGLKVKQCVHQIPAILLESSIQPITRTVLRVRLSITPDFRWNDQVHGSVGEPWWLWVEDPINDHIYHSEYFLLQKKQVVSGEPQQVVFTIPIFEPMPSQYYIRAVSDRWLGSEAVCIINFQHLILPERHPPHTELLDLQPLPITALGNREYESLYKFTHYNPIQTQIFHTLYHTDTNVLLGAPTGSGKTIAAEMAIFRVFNMYPTSKVVYIAPLKALVRERIEDWKIRIEEKLGRKVVELTGDNTPDMRAIAQADLIVTTPEKWDGVSRSWQNRSYVQKVAILIIDEIHLLGEDRGPVLEVIVSRTNFISSHTSKTVRVVGLSTALANARDLADWLGIGQVGLFNFRPSVRPVPLEVHIQGFPGQHYCPRMATMNKPVFQAIRTHSPAKPVLIFVSSRRQTRLTALDLIAFLATEDDPKQWLHQDEREMTDIIATIRESNLKLTLAFGIGMHHAGLHERDRKTVEELFVNCKIQVLIATSTLAWGVNFPAHLVIVKGTEYYDGKTRRYVDYPITDVLQMMGRAGRPQFDDQGKAVILVHDIKKDFYKKFLYEPFPVESSLLSVLSDHLNAEIAAGTVTSKQDAMDYITWTYFFRRLVMNPSYYNLDDISHETINKYLSNLVERSLRDLECSYCMEIQQDEQTIEPLTYGRISSYYYLKHQTIRMFKERLKPELPVHELLAILSLPCSDYGTDTKTVLDNAIRICQAMLDVVANEGWLVSALSLCNLVQMIIQARWLHDSSLLTLPHIQKQELYVFRRWSSRGVRAGCGHQGPIEGLPELIAACDGKEDIFTSMVKEVLQPNQISQ.

The region spanning 83–267 (ETAYNTNENL…FLHVNPFIGL (185 aa)) is the Helicase ATP-binding 1 domain. 96–103 (APTGAGKT) serves as a coordination point for ATP. The short motif at 209-212 (DEVH) is the DEVH box element. The Helicase C-terminal 1 domain maps to 294–500 (QLHDMEEVCY…SLADNLNAEI (207 aa)). In terms of domain architecture, SEC63 1 spans 576–849 (STDLGRTASH…GSEAVCIINF (274 aa)). The 176-residue stretch at 898 to 1073 (HTLYHTDTNV…WLGIGQVGLF (176 aa)) folds into the Helicase ATP-binding 2 domain. Residue 911-918 (APTGSGKT) participates in ATP binding. A DEIH box motif is present at residues 1015–1018 (DEIH). The Helicase C-terminal 2 domain maps to 1106-1313 (PVFQAIRTHS…GTVTSKQDAM (208 aa)). Positions 1374 to 1481 (PLTYGRISSY…TLPHIQKQEL (108 aa)) constitute an SEC63 2 domain.

It belongs to the helicase family.

It localises to the nucleus. The protein resides in the nucleus speckle. It is found in the cytoplasm. Its subcellular location is the cytosol. The enzyme catalyses Couples ATP hydrolysis with the unwinding of duplex DNA by translocating in the 3'-5' direction.. It carries out the reaction ATP + H2O = ADP + phosphate + H(+). Its function is as follows. 3'-5' DNA helicase involved in repair of alkylated DNA. Promotes DNA unwinding to generate single-stranded substrate needed for alkbh3, enabling alkbh3 to process alkylated N3-methylcytosine (3mC) within double-stranded regions. Also involved in activation of the ribosome quality control (RQC) pathway, a pathway that degrades nascent peptide chains during problematic translation. Drives the splitting of stalled ribosomes. This is Activating signal cointegrator 1 complex subunit 3 (ascc3) from Danio rerio (Zebrafish).